The chain runs to 381 residues: Succinyl-diaminopimelate desuccinylase (381 aa).

Residue His-69 coordinates Zn(2+). The active site involves Asp-71. Position 103 (Asp-103) interacts with Zn(2+). Glu-137 acts as the Proton acceptor in catalysis. Zn(2+)-binding residues include Glu-138, Glu-166, and His-355.

The protein belongs to the peptidase M20A family. DapE subfamily. Homodimer. The cofactor is Zn(2+). Co(2+) serves as cofactor.

It carries out the reaction N-succinyl-(2S,6S)-2,6-diaminopimelate + H2O = (2S,6S)-2,6-diaminopimelate + succinate. It functions in the pathway amino-acid biosynthesis; L-lysine biosynthesis via DAP pathway; LL-2,6-diaminopimelate from (S)-tetrahydrodipicolinate (succinylase route): step 3/3. In terms of biological role, catalyzes the hydrolysis of N-succinyl-L,L-diaminopimelic acid (SDAP), forming succinate and LL-2,6-diaminopimelate (DAP), an intermediate involved in the bacterial biosynthesis of lysine and meso-diaminopimelic acid, an essential component of bacterial cell walls. This is Succinyl-diaminopimelate desuccinylase from Rickettsia massiliae (strain Mtu5).